The sequence spans 495 residues: Pre-glycoprotein polyprotein GP complex (495 aa).

Residue Gly2 is the site of N-myristoyl glycine; by host attachment. At 2–17 (GQFISFMQEIPIFLQE) the chain is on the extracellular side. The chain crosses the membrane as a helical span at residues 18 to 33 (ALNIALVAVSLICIVK). The Cytoplasmic segment spans residues 34 to 58 (GLVNLYRCGLFQLMVFLVLAGRSCS). Cys57 serves as a coordination point for Zn(2+). Topologically, residues 59 to 434 (EETFKIGMHT…QGRTPITLVD (376 aa)) are extracellular. Intrachain disulfides connect Cys92-Cys236, Cys281-Cys294, Cys303-Cys312, and Cys366-Cys387. N-linked (GlcNAc...) asparagine; by host glycans are attached at residues Asn95 and Asn188. N-linked (GlcNAc...) asparagine; by host glycans are attached at residues Asn367, Asn375, Asn392, and Asn397. Residues 435-455 (ICFWSTVFFTSTLFLHLIGFP) form a helical membrane-spanning segment. Residues 456-495 (THEHIRGEGCPLPHRLNSMGGCRCGKYLPLKKPTIWHRRH) are Cytoplasmic-facing. Zn(2+) is bound by residues His457, His459, Cys465, His469, Cys477, Cys479, and His495.

This sequence belongs to the arenaviridae GPC protein family. In terms of assembly, interacts with glycoprotein G2. Part of the GP complex (GP-C) together with glycoprotein G1 and glycoprotein G2. The GP-complex interacts with protein Z, which interacts with ribonucleocapsid; these interactions may induce virion budding. Homotrimer; disulfide-linked. In pre-fusion state, G1 homotrimers bind G2 homotrimers via ionic interactions. Part of the GP complex (GP-C) together with glycoprotein G2 and the stable signal peptide. The GP-complex interacts with protein Z, which interacts with ribonucleocapsid; these interactions may induce virion budding. As to quaternary structure, homotrimer. Interacts with the stable signal peptide. In pre-fusion state, G2 homotrimers bind G1 homotrimers via ionic interactions. Part of the GP complex (GP-C) together with glycoprotein G1 and the stable signal peptide. Acidification in the endosome triggers rearrangements, which ultimately leads to a 6 helix bundle formed by the two heptad repeat domains (HR1 and HR2) in post-fusion state. The GP-complex interacts with protein Z, which interacts with ribonucleocapsid; these interactions may induce virion budding. Specific enzymatic cleavages in vivo yield mature proteins. GP-C polyprotein is cleaved in the endoplasmic reticulum by the host protease MBTPS1. Only cleaved glycoprotein is incorporated into virions. In terms of processing, the SSP remains stably associated with the GP complex following cleavage by signal peptidase and plays crucial roles in the trafficking of GP through the secretory pathway. Post-translationally, myristoylation is necessary for GP2-mediated fusion activity.

It localises to the virion membrane. The protein localises to the host endoplasmic reticulum membrane. The protein resides in the host Golgi apparatus membrane. It is found in the host cell membrane. Its function is as follows. Functions as a cleaved signal peptide that is retained as the third component of the GP complex (GP-C). Helps to stabilize the spike complex in its native conformation. The SSP is required for efficient glycoprotein expression, post-translational maturation cleavage of G1 and G2, glycoprotein transport to the cell surface plasma membrane, formation of infectious virus particles, and acid pH-dependent glycoprotein-mediated cell fusion. Forms the virion spikes together with glycoprotein G2. The glycoprotein spike trimers are connected to the underlying matrix. Interacts with the host receptor leading to virus endocytosis. In terms of biological role, forms the virion spikes together with glycoprotein G1. The glycoprotein spike trimers are connected to the underlying matrix. Class I viral fusion protein that directs fusion of viral and host endosomal membranes, leading to delivery of the nucleocapsid into the cytoplasm. Membrane fusion is mediated by irreversible conformational changes induced by acidification. The chain is Pre-glycoprotein polyprotein GP complex from Tacaribe virus (strain Franze-Fernandez) (TCRV).